Here is a 145-residue protein sequence, read N- to C-terminus: Class I hydrophobin rodE (145 aa).

4 disulfide bridges follow: cysteine 43/cysteine 126, cysteine 59/cysteine 120, cysteine 60/cysteine 95, and cysteine 127/cysteine 140.

The protein belongs to the fungal hydrophobin family. As to quaternary structure, self-assembles to form functional amyloid fibrils called rodlets. Self-assembly into fibrillar rodlets occurs spontaneously at hydrophobic:hydrophilic interfaces and the rodlets further associate laterally to form amphipathic monolayers.

Functionally, aerial growth, conidiation, and dispersal of filamentous fungi in the environment rely upon a capability of their secreting small amphipathic proteins called hydrophobins (HPBs) with low sequence identity. Class I can self-assemble into an outermost layer of rodlet bundles on aerial cell surfaces, conferring cellular hydrophobicity that supports fungal growth, development and dispersal; whereas Class II form highly ordered films at water-air interfaces through intermolecular interactions but contribute nothing to the rodlet structure. RodE is a class I hydrophobin that, unlike rodA, is not required for rodlet formation. The polypeptide is Class I hydrophobin rodE (Aspergillus fumigatus (strain ATCC MYA-4609 / CBS 101355 / FGSC A1100 / Af293) (Neosartorya fumigata)).